Consider the following 286-residue polypeptide: Beta-lactamase SHV-5 (286 aa).

Positions 1–21 (MRYIRLCIISLLATLPLAVHA) are cleaved as a signal peptide. Residue Ser66 is the Acyl-ester intermediate of the active site. An intrachain disulfide couples Cys73 to Cys119. Glu164 serves as the catalytic Proton acceptor. 230-232 (KTG) is a binding site for substrate.

Belongs to the class-A beta-lactamase family.

It carries out the reaction a beta-lactam + H2O = a substituted beta-amino acid. In terms of biological role, SHV enzymes hydrolyze broad spectrum cephalosporins notably cefotaxime and ceftazidime. SHV-5 causes particularly high levels of resistance to aztreonam and ceftazidime. This is Beta-lactamase SHV-5 (bla) from Klebsiella pneumoniae.